The sequence spans 176 residues: Large ribosomal subunit protein uL10 (176 aa).

It belongs to the universal ribosomal protein uL10 family. In terms of assembly, part of the ribosomal stalk of the 50S ribosomal subunit. The N-terminus interacts with L11 and the large rRNA to form the base of the stalk. The C-terminus forms an elongated spine to which L12 dimers bind in a sequential fashion forming a multimeric L10(L12)X complex.

Functionally, forms part of the ribosomal stalk, playing a central role in the interaction of the ribosome with GTP-bound translation factors. The protein is Large ribosomal subunit protein uL10 (rplJ) of Streptomyces antibioticus.